The following is a 391-amino-acid chain: Processive diacylglycerol beta-glucosyltransferase (391 aa).

It belongs to the glycosyltransferase 28 family. UgtP subfamily.

It localises to the cell membrane. The catalysed reaction is a 1,2-diacyl-3-O-(beta-D-glucopyranosyl)-sn-glycerol + UDP-alpha-D-glucose = a 1,2-diacyl-3-O-(beta-D-Glc-(1-&gt;6)-beta-D-Glc)-sn-glycerol + UDP + H(+). It catalyses the reaction a 1,2-diacyl-sn-glycerol + UDP-alpha-D-glucose = a 1,2-diacyl-3-O-(beta-D-glucopyranosyl)-sn-glycerol + UDP + H(+). It participates in glycolipid metabolism; diglucosyl-diacylglycerol biosynthesis. Its function is as follows. Processive glucosyltransferase involved in the biosynthesis of both the bilayer- and non-bilayer-forming membrane glucolipids. Is able to successively transfer two glucosyl residues to diacylglycerol (DAG), thereby catalyzing the formation of beta-monoglucosyl-DAG (3-O-(beta-D-glucopyranosyl)-1,2-diacyl-sn-glycerol) and beta-diglucosyl-DAG (3-O-(beta-D-glucopyranosyl-beta-(1-&gt;6)-D-glucopyranosyl)-1,2-diacyl-sn-glycerol). Beta-diglucosyl-DAG is the predominant glycolipid found in Bacillales and is also used as a membrane anchor for lipoteichoic acid (LTA). The chain is Processive diacylglycerol beta-glucosyltransferase from Staphylococcus aureus (strain Mu3 / ATCC 700698).